A 284-amino-acid chain; its full sequence is ATP phosphoribosyltransferase (284 aa).

Belongs to the ATP phosphoribosyltransferase family. Long subfamily. It depends on Mg(2+) as a cofactor.

The protein resides in the cytoplasm. The catalysed reaction is 1-(5-phospho-beta-D-ribosyl)-ATP + diphosphate = 5-phospho-alpha-D-ribose 1-diphosphate + ATP. It participates in amino-acid biosynthesis; L-histidine biosynthesis; L-histidine from 5-phospho-alpha-D-ribose 1-diphosphate: step 1/9. With respect to regulation, feedback inhibited by histidine. Catalyzes the condensation of ATP and 5-phosphoribose 1-diphosphate to form N'-(5'-phosphoribosyl)-ATP (PR-ATP). Has a crucial role in the pathway because the rate of histidine biosynthesis seems to be controlled primarily by regulation of HisG enzymatic activity. This Pseudarthrobacter chlorophenolicus (strain ATCC 700700 / DSM 12829 / CIP 107037 / JCM 12360 / KCTC 9906 / NCIMB 13794 / A6) (Arthrobacter chlorophenolicus) protein is ATP phosphoribosyltransferase.